Reading from the N-terminus, the 162-residue chain is MKPNYRIFSIVTAVSLVIDQATKILVDRTLELYQSIPVVPGLFSITYMRNKGAAFSFLSNFDYRRPFFIAVTLVAMAAIAITFRKLRDDQRLAAVSLSLIFSGAVGNLIDRVRLGEVIDFLDVYWKTHHWPAFNVADSAICVGVALLALDMIRDERRQSKDN.

2 helical membrane passes run 66–86 (PFFI…FRKL) and 92–112 (LAAV…IDRV). Residues aspartate 119 and aspartate 137 contribute to the active site. Residues 132–152 (AFNVADSAICVGVALLALDMI) traverse the membrane as a helical segment.

The protein belongs to the peptidase A8 family.

Its subcellular location is the cell inner membrane. It catalyses the reaction Release of signal peptides from bacterial membrane prolipoproteins. Hydrolyzes -Xaa-Yaa-Zaa-|-(S,diacylglyceryl)Cys-, in which Xaa is hydrophobic (preferably Leu), and Yaa (Ala or Ser) and Zaa (Gly or Ala) have small, neutral side chains.. It functions in the pathway protein modification; lipoprotein biosynthesis (signal peptide cleavage). This protein specifically catalyzes the removal of signal peptides from prolipoproteins. In Geobacter metallireducens (strain ATCC 53774 / DSM 7210 / GS-15), this protein is Lipoprotein signal peptidase.